A 117-amino-acid chain; its full sequence is Immunoglobulin lambda variable 10-54 (117 aa).

Positions 1–21 (MPWALLLLTLLTHSAVSVVQA) are cleaved as a signal peptide. The segment at 20–43 (QAGLTQPPSVSKGLRQTATLTCTG) is framework-1. Positions 22 to 117 (GLTQPPSVSK…CSALDSSLSA (96 aa)) constitute an Ig-like domain. Cys-41 and Cys-108 are disulfide-bonded. Residues 44 to 52 (NSNIVGNQG) are complementarity-determining-1. The interval 53-69 (AAWLQQHQGHPPKLLSY) is framework-2. The tract at residues 70-72 (RNN) is complementarity-determining-2. The segment at 73–108 (NRPSGISERFSASRSGNTASLTITGLQPEDEADYYC) is framework-3. The segment at 109–117 (SALDSSLSA) is complementarity-determining-3.

In terms of assembly, immunoglobulins are composed of two identical heavy chains and two identical light chains; disulfide-linked.

The protein resides in the secreted. Its subcellular location is the cell membrane. Functionally, v region of the variable domain of immunoglobulin light chains that participates in the antigen recognition. Immunoglobulins, also known as antibodies, are membrane-bound or secreted glycoproteins produced by B lymphocytes. In the recognition phase of humoral immunity, the membrane-bound immunoglobulins serve as receptors which, upon binding of a specific antigen, trigger the clonal expansion and differentiation of B lymphocytes into immunoglobulins-secreting plasma cells. Secreted immunoglobulins mediate the effector phase of humoral immunity, which results in the elimination of bound antigens. The antigen binding site is formed by the variable domain of one heavy chain, together with that of its associated light chain. Thus, each immunoglobulin has two antigen binding sites with remarkable affinity for a particular antigen. The variable domains are assembled by a process called V-(D)-J rearrangement and can then be subjected to somatic hypermutations which, after exposure to antigen and selection, allow affinity maturation for a particular antigen. This is Immunoglobulin lambda variable 10-54 from Homo sapiens (Human).